Consider the following 206-residue polypeptide: MRYTVALTGGIGSGKSTVSDAFADLGITVIDADIIARQMVEPGQPTLNAIAEHFGSELIAADGTLRRRALRERIFSHPEEKAWLNALLHPLIQQETQRQFQQATSPYVLWVVPLLVENRLYQKANRVLVVDVTPETQLIRTMQRDDVTREHVEHILAAQATREARLAVADDVIDNNGAPDAIASDVARLHASYLKLASQFVSQEKP.

The region spanning Thr4–Phe200 is the DPCK domain. Gly12–Thr17 contacts ATP.

The protein belongs to the CoaE family.

The protein localises to the cytoplasm. The catalysed reaction is 3'-dephospho-CoA + ATP = ADP + CoA + H(+). It participates in cofactor biosynthesis; coenzyme A biosynthesis; CoA from (R)-pantothenate: step 5/5. Its function is as follows. Catalyzes the phosphorylation of the 3'-hydroxyl group of dephosphocoenzyme A to form coenzyme A. The sequence is that of Dephospho-CoA kinase from Salmonella choleraesuis (strain SC-B67).